The primary structure comprises 222 residues: Cytidylate kinase (222 aa).

An ATP-binding site is contributed by 11–19; that stretch reads GPAGAGKST.

This sequence belongs to the cytidylate kinase family. Type 1 subfamily.

The protein resides in the cytoplasm. It carries out the reaction CMP + ATP = CDP + ADP. The catalysed reaction is dCMP + ATP = dCDP + ADP. This Desulforamulus reducens (strain ATCC BAA-1160 / DSM 100696 / MI-1) (Desulfotomaculum reducens) protein is Cytidylate kinase.